The following is a 428-amino-acid chain: UPF0597 protein PBPRB0240 (428 aa).

The protein belongs to the UPF0597 family.

The chain is UPF0597 protein PBPRB0240 from Photobacterium profundum (strain SS9).